The sequence spans 430 residues: MLDPNLLRTEPDAVAEKLARRGFKLDVDKLVALEERRKVLQVKTENLQAERNSRSKSIGQAKARGEDIEPLRLEVNKLGEELDAAKNELDALLAEIRDIALTLPNLPDDEVPLGKDDSENVEVSRWGTPRKFDFEIRDHVTLGETLGGLDFASAVKLTGSRFVVMKGQIARLHRALSQFMLDLHTEEHGYSENYVPYLVNHDTLYGTGQLPKFAGDLFHTRPLEEEADSSNYALIPTAEVPLTNLVRDEIIDEESLPIKMTAHTPCFRSEAGSYGRDTRGLIRMHQFDKVEMVQVVRPEDSMQALEEMTGHAEKVLQLLGLPYRKVLLCSGDMGFGARKTYDLEVWLPAQDTYREISSCSNMWDFQARRMQARCRSKSDKKTRLVHTLNGSGLAVGRTLVAVLENYQQADGRIEIPEVLRPYMKGLEFIG.

237–239 (TAE) serves as a coordination point for L-serine. 268–270 (RSE) contributes to the ATP binding site. Glu291 contributes to the L-serine binding site. 355–358 (EISS) serves as a coordination point for ATP. Residue Ser391 participates in L-serine binding.

The protein belongs to the class-II aminoacyl-tRNA synthetase family. Type-1 seryl-tRNA synthetase subfamily. In terms of assembly, homodimer. The tRNA molecule binds across the dimer.

It localises to the cytoplasm. The enzyme catalyses tRNA(Ser) + L-serine + ATP = L-seryl-tRNA(Ser) + AMP + diphosphate + H(+). It carries out the reaction tRNA(Sec) + L-serine + ATP = L-seryl-tRNA(Sec) + AMP + diphosphate + H(+). The protein operates within aminoacyl-tRNA biosynthesis; selenocysteinyl-tRNA(Sec) biosynthesis; L-seryl-tRNA(Sec) from L-serine and tRNA(Sec): step 1/1. Its function is as follows. Catalyzes the attachment of serine to tRNA(Ser). Is also able to aminoacylate tRNA(Sec) with serine, to form the misacylated tRNA L-seryl-tRNA(Sec), which will be further converted into selenocysteinyl-tRNA(Sec). The polypeptide is Serine--tRNA ligase (Cronobacter sakazakii (strain ATCC BAA-894) (Enterobacter sakazakii)).